A 143-amino-acid polypeptide reads, in one-letter code: MRCLLLLLLVPVPGAKVFERCEWARLLKRNGMSNYRGISLADWVCLSQWESSYNTRATNRNTDGSTDYGIFQINSRWWCDNGQTPTSNACGISCSALLTDDVGAAIICAKHVVRDPNGIGAWVAWKRHCQGQDLSSYVAGCGV.

The N-terminal stretch at 1-15 is a signal peptide; sequence MRCLLLLLLVPVPGA. Residues 16-143 enclose the C-type lysozyme domain; the sequence is KVFERCEWAR…LSSYVAGCGV (128 aa). Disulfide bonds link cysteine 21–cysteine 141, cysteine 45–cysteine 129, cysteine 79–cysteine 94, and cysteine 90–cysteine 108. Residues glutamate 50 and aspartate 67 contribute to the active site.

The protein belongs to the glycosyl hydrolase 22 family. As to quaternary structure, monomer.

It localises to the secreted. The catalysed reaction is Hydrolysis of (1-&gt;4)-beta-linkages between N-acetylmuramic acid and N-acetyl-D-glucosamine residues in a peptidoglycan and between N-acetyl-D-glucosamine residues in chitodextrins.. Functionally, lysozymes have primarily a bacteriolytic function; those in tissues and body fluids are associated with the monocyte-macrophage system and enhance the activity of immunoagents. In Scophthalmus maximus (Turbot), this protein is Lysozyme C (lys).